The primary structure comprises 675 residues: Potassium-transporting ATPase ATP-binding subunit 2 (675 aa).

A run of 4 helical transmembrane segments spans residues 34–54, 65–85, 216–236, and 245–265; these read IMFV…FPDI, LITI…SEAF, IALF…IVTL, and LILP…TTIG. The active-site 4-aspartylphosphate intermediate is the Asp304. ATP-binding positions include Asp341, Glu345, 372-379, and Lys390; that span reads FTAETRMS. Mg(2+) contacts are provided by Asp513 and Asp517. Helical transmembrane passes span 569–591, 611–631, and 644–664; these read ALTT…ALMM, AIIS…PIAM, and IFIN…FLGI.

This sequence belongs to the cation transport ATPase (P-type) (TC 3.A.3) family. Type IA subfamily. The system is composed of three essential subunits: KdpA, KdpB and KdpC.

It localises to the cell membrane. The catalysed reaction is K(+)(out) + ATP + H2O = K(+)(in) + ADP + phosphate + H(+). Part of the high-affinity ATP-driven potassium transport (or Kdp) system, which catalyzes the hydrolysis of ATP coupled with the electrogenic transport of potassium into the cytoplasm. This subunit is responsible for energy coupling to the transport system and for the release of the potassium ions to the cytoplasm. The polypeptide is Potassium-transporting ATPase ATP-binding subunit 2 (Staphylococcus aureus (strain MRSA252)).